The chain runs to 98 residues: Co-chaperonin GroES 1 (98 aa).

The protein belongs to the GroES chaperonin family. In terms of assembly, heptamer of 7 subunits arranged in a ring. Interacts with the chaperonin GroEL.

Its subcellular location is the cytoplasm. Its function is as follows. Together with the chaperonin GroEL, plays an essential role in assisting protein folding. The GroEL-GroES system forms a nano-cage that allows encapsulation of the non-native substrate proteins and provides a physical environment optimized to promote and accelerate protein folding. GroES binds to the apical surface of the GroEL ring, thereby capping the opening of the GroEL channel. This chain is Co-chaperonin GroES 1, found in Rhizobium meliloti (strain 1021) (Ensifer meliloti).